A 701-amino-acid polypeptide reads, in one-letter code: Elongation factor G (701 aa).

The tr-type G domain maps to 6 to 285; the sequence is HKVRNIGIMA…AVVAYLPNPL (280 aa). Residues 15 to 22, 79 to 83, and 133 to 136 contribute to the GTP site; these read AHIDAGKT, DNPGH, and NKMD.

Belongs to the TRAFAC class translation factor GTPase superfamily. Classic translation factor GTPase family. EF-G/EF-2 subfamily.

Its subcellular location is the cytoplasm. Its function is as follows. Catalyzes the GTP-dependent ribosomal translocation step during translation elongation. During this step, the ribosome changes from the pre-translocational (PRE) to the post-translocational (POST) state as the newly formed A-site-bound peptidyl-tRNA and P-site-bound deacylated tRNA move to the P and E sites, respectively. Catalyzes the coordinated movement of the two tRNA molecules, the mRNA and conformational changes in the ribosome. The chain is Elongation factor G (fusA) from Micrococcus luteus (Micrococcus lysodeikticus).